The chain runs to 368 residues: Histidinol-phosphate aminotransferase (368 aa).

An N6-(pyridoxal phosphate)lysine modification is found at Lys-215.

It belongs to the class-II pyridoxal-phosphate-dependent aminotransferase family. Histidinol-phosphate aminotransferase subfamily. In terms of assembly, homodimer. It depends on pyridoxal 5'-phosphate as a cofactor.

It carries out the reaction L-histidinol phosphate + 2-oxoglutarate = 3-(imidazol-4-yl)-2-oxopropyl phosphate + L-glutamate. The protein operates within amino-acid biosynthesis; L-histidine biosynthesis; L-histidine from 5-phospho-alpha-D-ribose 1-diphosphate: step 7/9. The protein is Histidinol-phosphate aminotransferase of Buchnera aphidicola subsp. Acyrthosiphon pisum (strain 5A).